The following is a 661-amino-acid chain: Zeaxanthin epoxidase, chloroplastic (661 aa).

A chloroplast-targeting transit peptide spans M1–S50. FAD-binding positions include R82–E110 and I360–D373. One can recognise an FHA domain in the interval C558 to I607.

It depends on FAD as a cofactor.

It localises to the plastid. The protein localises to the chloroplast. The enzyme catalyses all-trans-zeaxanthin + 4 reduced [2Fe-2S]-[ferredoxin] + 2 O2 + 4 H(+) = all-trans-violaxanthin + 4 oxidized [2Fe-2S]-[ferredoxin] + 2 H2O. It functions in the pathway plant hormone biosynthesis; abscisate biosynthesis. Converts zeaxanthin into antheraxanthin and subsequently violaxanthin. Involved in the epoxidation of zeaxanthin. The sequence is that of Zeaxanthin epoxidase, chloroplastic from Prunus armeniaca (Apricot).